The following is a 296-amino-acid chain: Low affinity immunoglobulin gamma Fc region receptor II (296 aa).

Residues 1–42 form the signal peptide; sequence MGIPSFLAFPAARRNRAHCTPWHPWGHMLLWTALLFLAPVSG. Topologically, residues 43 to 225 are extracellular; sequence KPDLPKAVVT…SSSSGPSSMT (183 aa). Ig-like C2-type domains are found at residues 47–129 and 130–212; these read PKAV…DVIS and DWLL…VNIT. 2 cysteine pairs are disulfide-bonded: Cys70–Cys112 and Cys151–Cys195. Residues Asn79, Asn86, Asn105, Asn179, Asn186, and Asn210 are each glycosylated (N-linked (GlcNAc...) asparagine). A helical transmembrane segment spans residues 226–246; the sequence is AVAIGTCFAAVAIVAAIITWF. The Cytoplasmic segment spans residues 247-296; the sequence is RLRRKPISAGLTDAENDAARTEAENTVTYSLLSHPDVAEEDSESDYQKRL. Residues 273-278 carry the ITIM motif motif; sequence VTYSLL. Residue Tyr275 is modified to Phosphotyrosine; by SRC-type Tyr-kinases. The residue at position 288 (Ser288) is a Phosphoserine. Phosphotyrosine is present on Tyr292.

In terms of assembly, interacts with FGR and LYN. Post-translationally, phosphorylated by SRC-type Tyr-kinases such as LYN, BLK, FYN and SYK. Higher expression is found in macrophages than in neutrophils.

Its subcellular location is the cell membrane. In terms of biological role, binds to the Fc region of immunoglobulins gamma. Low affinity receptor. The sequence is that of Low affinity immunoglobulin gamma Fc region receptor II (FCGR2) from Bos taurus (Bovine).